Here is an 839-residue protein sequence, read N- to C-terminus: Autophagy-related protein 9A (839 aa).

The residue at position 2 (Ala-2) is an N-acetylalanine. Over 2-61 (AQFDTEYQRLEASYSDSPPGEEDLLVHVAEGSKSPWHHIENLDLFFSRVYNLHQKNGFTC) the chain is Cytoplasmic. The Tyrosine-based sorting signal motif lies at 8-11 (YQRL). Phosphoserine is present on residues Ser-14, Ser-16, and Ser-18. A helical membrane pass occupies residues 62-84 (MLIGEIFELMQFLFVVAFTTFLV). At 85–128 (SCVDYDILFANKMVNHSLHPTEPVKVTLPDAFLPAQVCSARIQE) the chain is on the lumenal side. The N-linked (GlcNAc...) asparagine glycan is linked to Asn-99. The helical transmembrane segment at 129–154 (NGSLITILVIAGVFWIHRLIKFIYNI) threads the bilayer. At 155–290 (CCYWEIHSFY…ELAQRLSNRI (136 aa)) the chain is on the cytoplasmic side. An intramembrane segment occupies 291–301 (LWIGIANFLLC). At 302–319 (PLILIWQILYAFFSYAEV) the chain is on the cytoplasmic side. An intramembrane segment occupies 320 to 328 (LKREPGALG). Over 329-371 (ARCWSLYGRCYLRHFNELEHELQSRLNRGYKPASKYMNCFLSP) the chain is Cytoplasmic. The helical transmembrane segment at 372-397 (LLTLLAKNGAFFAGSILAVLIALTIY) threads the bilayer. Topologically, residues 398–406 (DEDVLAVEH) are lumenal. The chain crosses the membrane as a helical span at residues 407–424 (VLTTVTLLGVTVTVCRSF). At 425–470 (IPDQHMVFCPEQLLRVILAHIHYMPDHWQGNAHRSQTRDEFAQLFQ) the chain is on the cytoplasmic side. The stretch at 471 to 480 (YKAVFILEEL) is an intramembrane region. Residues 481–483 (LSP) lie on the Cytoplasmic side of the membrane. Residues 484–492 (IVTPLILIF) lie within the membrane without spanning it. Residues 493-839 (CLRPRALEII…DELPPQVHKV (347 aa)) lie on the Cytoplasmic side of the membrane. Ser-656, Ser-735, Ser-738, Ser-741, and Ser-828 each carry phosphoserine. Disordered regions lie at residues 656-689 (SPLQPGQAPQGRVPSTMTGSGVDARTASSGSSVW) and 717-839 (HKQQ…VHKV). The segment covering 724-736 (EPERHVWHRRESD) has biased composition (basic and acidic residues). 2 stretches are compositionally biased toward acidic residues: residues 737-747 (ESGESAPEEGG) and 823-832 (VPEEGSEDEL).

This sequence belongs to the ATG9 family. In terms of assembly, homotrimer; forms a homotrimer with a central pore that forms a path between the two membrane leaflets. Interacts (via cytoplasmic its C-terminus) with ATG2A. Interacts with SUPT20H. Interacts (via the tyrosine-based sorting signal motif) with AP4M1; promoting association with the AP-4 complex. Interacts with ARFIP1 and ARFIP2. Interacts with PI4K2A and PI4KB. Interacts with ATG4A; the interaction is direct and promotes ATG9A trafficking. In terms of processing, ufmylated in a DDRGK1 dependent manner.

It localises to the preautophagosomal structure membrane. Its subcellular location is the cytoplasmic vesicle. The protein localises to the autophagosome membrane. It is found in the golgi apparatus. The protein resides in the trans-Golgi network membrane. It localises to the late endosome membrane. Its subcellular location is the recycling endosome membrane. The protein localises to the endoplasmic reticulum membrane. It is found in the mitochondrion membrane. It catalyses the reaction a 1,2-diacyl-sn-glycero-3-phosphocholine(in) = a 1,2-diacyl-sn-glycero-3-phosphocholine(out). It carries out the reaction a 1,2-diacyl-sn-glycero-3-phospho-L-serine(in) = a 1,2-diacyl-sn-glycero-3-phospho-L-serine(out). The enzyme catalyses a 1,2-diacyl-sn-glycero-3-phosphoethanolamine(in) = a 1,2-diacyl-sn-glycero-3-phosphoethanolamine(out). Functionally, phospholipid scramblase involved in autophagy by mediating autophagosomal membrane expansion. Cycles between the preautophagosomal structure/phagophore assembly site (PAS) and the cytoplasmic vesicle pool and supplies membrane for the growing autophagosome. Lipid scramblase activity plays a key role in preautophagosomal structure/phagophore assembly by distributing the phospholipids that arrive through ATG2 (ATG2A or ATG2B) from the cytoplasmic to the luminal leaflet of the bilayer, thereby driving autophagosomal membrane expansion. Also required to supply phosphatidylinositol 4-phosphate to the autophagosome initiation site by recruiting the phosphatidylinositol 4-kinase beta (PI4KB) in a process dependent on ARFIP2, but not ARFIP1. In addition to autophagy, also plays a role in necrotic cell death. The protein is Autophagy-related protein 9A of Rattus norvegicus (Rat).